The primary structure comprises 113 residues: Dolichyl-diphosphooligosaccharide--protein glycosyltransferase subunit DAD1 (113 aa).

S2 is subject to N-acetylserine. Residues 2 to 30 are Cytoplasmic-facing; the sequence is SASVVSVISRFLEEYLSSTPQRLKLLDAY. The helical transmembrane segment at 31-51 threads the bilayer; that stretch reads LLYILLTGALQFGYCLLVGTF. Residue P52 is a topological domain, lumenal. The chain crosses the membrane as a helical span at residues 53–73; the sequence is FNSFLSGFISCVGSFILAVRL. At 74–92 the chain is on the cytoplasmic side; it reads RIQINPQNKADFQGISPER. A helical membrane pass occupies residues 93–113; that stretch reads AFADFLFASTILHLVVMNFVG.

It belongs to the DAD/OST2 family. Component of the oligosaccharyltransferase (OST) complex. OST exists in two different complex forms which contain common core subunits RPN1, RPN2, OST48, OST4, DAD1 and TMEM258, either STT3A or STT3B as catalytic subunits, and form-specific accessory subunits. STT3A complex assembly occurs through the formation of 3 subcomplexes. Subcomplex 1 contains RPN1 and TMEM258, subcomplex 2 contains the STT3A-specific subunits STT3A, DC2/OSTC, and KCP2 as well as the core subunit OST4, and subcomplex 3 contains RPN2, DAD1, and OST48. The STT3A complex can form stable complexes with the Sec61 complex or with both the Sec61 and TRAP complexes.

The protein localises to the endoplasmic reticulum membrane. The protein operates within protein modification; protein glycosylation. Its function is as follows. Subunit of the oligosaccharyl transferase (OST) complex that catalyzes the initial transfer of a defined glycan (Glc(3)Man(9)GlcNAc(2) in eukaryotes) from the lipid carrier dolichol-pyrophosphate to an asparagine residue within an Asn-X-Ser/Thr consensus motif in nascent polypeptide chains, the first step in protein N-glycosylation. N-glycosylation occurs cotranslationally and the complex associates with the Sec61 complex at the channel-forming translocon complex that mediates protein translocation across the endoplasmic reticulum (ER). All subunits are required for a maximal enzyme activity. This Pongo abelii (Sumatran orangutan) protein is Dolichyl-diphosphooligosaccharide--protein glycosyltransferase subunit DAD1.